The primary structure comprises 108 residues: MTNSQSDAALAAVPDRFDPSAGGPGAYDTPLGITNPPIDELLDRVSSKYALVIYAAKRARQINDYYNQLGEGILEYVGPLVEPGLQEKPLSIALREIHGDLLEHTEGE.

The tract at residues 1–32 (MTNSQSDAALAAVPDRFDPSAGGPGAYDTPLG) is disordered.

This sequence belongs to the RNA polymerase subunit omega family. The RNAP catalytic core consists of 2 alpha, 1 beta, 1 beta' and 1 omega subunit. When a sigma factor is associated with the core the holoenzyme is formed, which can initiate transcription.

The enzyme catalyses RNA(n) + a ribonucleoside 5'-triphosphate = RNA(n+1) + diphosphate. Its function is as follows. Promotes RNA polymerase assembly. Latches the N- and C-terminal regions of the beta' subunit thereby facilitating its interaction with the beta and alpha subunits. The polypeptide is DNA-directed RNA polymerase subunit omega (Mycobacterium avium (strain 104)).